We begin with the raw amino-acid sequence, 298 residues long: uncharacterized protein (298 aa).

Helical transmembrane passes span 10-30, 36-56, 76-96, 101-121, 142-162, 179-199, 212-232, 243-263, and 271-291; these read VIYT…WKLL, LDIL…VLFF, ILSL…YIWA, FLLE…LLGI, GVII…LLAF, AIGL…YLLF, GTWL…LLFA, VGIL…FVYH, and AFTF…QVKW. 2 EamA domains span residues 17-148 and 162-286; these read FIMW…ISAF and FSFG…LFTF.

It belongs to the EamA transporter family.

It localises to the cell membrane. This is an uncharacterized protein from Bacillus subtilis (strain 168).